The primary structure comprises 268 residues: Orotidine 5'-phosphate decarboxylase (268 aa).

Substrate contacts are provided by residues aspartate 37, 59–61, 91–100, tyrosine 217, and arginine 235; these read KTH and DRKFADIGNT. Lysine 93 acts as the Proton donor in catalysis.

It belongs to the OMP decarboxylase family.

The catalysed reaction is orotidine 5'-phosphate + H(+) = UMP + CO2. It functions in the pathway pyrimidine metabolism; UMP biosynthesis via de novo pathway; UMP from orotate: step 2/2. In Maudiozyma exigua (Yeast), this protein is Orotidine 5'-phosphate decarboxylase (URA4).